A 641-amino-acid chain; its full sequence is Chaperone protein HtpG (641 aa).

Residues 1–348 are a; substrate-binding; it reads MTTATEKQTL…SNDLSLNVSR (348 aa). The tract at residues 349 to 565 is b; it reads EILQNDKAVE…AYDMGVQMRR (217 aa). The tract at residues 566–641 is c; sequence IMEAAGQALP…KLLLELSNAG (76 aa).

This sequence belongs to the heat shock protein 90 family. As to quaternary structure, homodimer.

Its subcellular location is the cytoplasm. Its function is as follows. Molecular chaperone. Has ATPase activity. The protein is Chaperone protein HtpG of Hahella chejuensis (strain KCTC 2396).